Consider the following 1953-residue polypeptide: Putative surface-exposed virulence protein BigA (1953 aa).

Positions 1–27 (MNPMQKKKLISIAIALTLQSYYIPAIA) are cleaved as a signal peptide. Disordered regions lie at residues 31–50 (NDDEKECPSNISSLPKEKRA), 88–258 (GGGD…TFSN), and 1496–1517 (TTAPTEGSIPTPPADPNAPQQL). One copy of the 1; truncated repeat lies at 101–103 (PDN). The interval 101–252 (PDNGGDVTPP…DDDDTPPDDS (152 aa)) is 15 X 11 AA tandem repeats. The 2; truncated repeat unit spans residues 104 to 113 (GGDVTPPDDG). Residues 114–122 (GNVTPPDDG) form a 3; truncated repeat. Repeat copies occupy residues 123 to 133 (GNVTPPDDGGD), 134 to 144 (DNVTPPDDSGD), 145 to 155 (DDVAPPDDSGD), 156 to 166 (DDVTPPDDSGD), 167 to 177 (DDVTPPDDSGD), 178 to 188 (GDVTPPDDSGD), 189 to 199 (DDVTPPDDSGD), 200 to 210 (DDVTPPDDSGD), 211 to 221 (DDVTPPDDSGD), 222 to 232 (DDVTPPDDSGD), and 233 to 243 (DDVTPPDDSGD). 2 stretches are compositionally biased toward acidic residues: residues 141 to 177 (DSGDDDVAPPDDSGDDDVTPPDDSGDDDVTPPDDSGD) and 185 to 249 (DSGD…DTPP). Residues 244–252 (DDDTPPDDS) form a 15; truncated repeat. The 304-residue stretch at 1649–1952 (SGAQATTVFR…GFMLNVKKTF (304 aa)) folds into the Autotransporter domain.

The protein is Putative surface-exposed virulence protein BigA (bigA) of Salmonella typhimurium (strain LT2 / SGSC1412 / ATCC 700720).